Here is a 193-residue protein sequence, read N- to C-terminus: 3-isopropylmalate dehydratase small subunit (193 aa).

This sequence belongs to the LeuD family. LeuD type 1 subfamily. In terms of assembly, heterodimer of LeuC and LeuD.

It catalyses the reaction (2R,3S)-3-isopropylmalate = (2S)-2-isopropylmalate. Its pathway is amino-acid biosynthesis; L-leucine biosynthesis; L-leucine from 3-methyl-2-oxobutanoate: step 2/4. Functionally, catalyzes the isomerization between 2-isopropylmalate and 3-isopropylmalate, via the formation of 2-isopropylmaleate. The sequence is that of 3-isopropylmalate dehydratase small subunit from Bacillus cereus (strain AH820).